The sequence spans 159 residues: Protein-export protein SecB (159 aa).

This sequence belongs to the SecB family. In terms of assembly, homotetramer, a dimer of dimers. One homotetramer interacts with 1 SecA dimer.

It is found in the cytoplasm. Its function is as follows. One of the proteins required for the normal export of preproteins out of the cell cytoplasm. It is a molecular chaperone that binds to a subset of precursor proteins, maintaining them in a translocation-competent state. It also specifically binds to its receptor SecA. The polypeptide is Protein-export protein SecB (Burkholderia mallei (strain NCTC 10229)).